The sequence spans 984 residues: G patch domain-containing protein TGH homolog (984 aa).

The segment covering 130–144 (EHARKQASKEQKERP) has biased composition (basic and acidic residues). The segment at 130 to 153 (EHARKQASKEQKERPSAIPGPIPD) is disordered. The G-patch domain maps to 160-202 (TTSIGVKLLMKMGWRQGRSIRDAHADSLYESRREARKAFLALS). Residues 408–450 (LIEGCAAMVARCGKHIEDFYKEKSKTNTQFNFLNEGDGCSYYA) form an SURP motif repeat. 4 disordered regions span residues 464–503 (QKPDTVQSKSSDKLTAENRGKILGERPLDRSTKSSSSSFP), 679–717 (TRTNEVESSSIAPQHTSVAGATETEAKGAATDPEIESSS), 775–806 (LGLDVPPEKPTPPNVLFRSETPSTANAIGISR), and 820–984 (ESAL…HHKR). A compositionally biased stretch (basic and acidic residues) spans 473–495 (SSDKLTAENRGKILGERPLDRST). Residues 679–695 (TRTNEVESSSIAPQHTS) are compositionally biased toward polar residues. Low complexity predominate over residues 697–709 (AGATETEAKGAAT). Positions 814-859 (QEIKENESALDKEEIANASADVPSDNVEELGLKYEKQEHRAEKSRS) form a coiled coil. Residues 843–858 (LGLKYEKQEHRAEKSR) show a composition bias toward basic and acidic residues. 3 stretches are compositionally biased toward basic residues: residues 882-892 (SRERRSRHKIR), 905-922 (HRSKKRKSHSKHRTRRSR), and 934-946 (TKRKHREKRHHRT). A compositionally biased stretch (basic and acidic residues) spans 947 to 974 (RNPDTDSSDHEYEERHKSSSRRSSDKDR). Positions 975 to 984 (SRRRSRHHKR) are enriched in basic residues.

Its subcellular location is the nucleus. Functions as a component of microRNA (miRNA) and small interfering RNA (siRNA) biogenesis. May assist Dicer-like (DCL) proteins to efficiently process and/or recruit the precursors of miRNAs and siRNAs. The polypeptide is G patch domain-containing protein TGH homolog (Oryza sativa subsp. japonica (Rice)).